The sequence spans 130 residues: Small ribosomal subunit protein uS8 (130 aa).

Belongs to the universal ribosomal protein uS8 family. As to quaternary structure, part of the 30S ribosomal subunit. Contacts proteins S5 and S12.

Its function is as follows. One of the primary rRNA binding proteins, it binds directly to 16S rRNA central domain where it helps coordinate assembly of the platform of the 30S subunit. The protein is Small ribosomal subunit protein uS8 of Pseudomonas entomophila (strain L48).